The primary structure comprises 336 residues: Phenylalanine--tRNA ligase alpha subunit (336 aa).

E263 lines the Mg(2+) pocket.

It belongs to the class-II aminoacyl-tRNA synthetase family. Phe-tRNA synthetase alpha subunit type 1 subfamily. In terms of assembly, tetramer of two alpha and two beta subunits. The cofactor is Mg(2+).

The protein resides in the cytoplasm. The catalysed reaction is tRNA(Phe) + L-phenylalanine + ATP = L-phenylalanyl-tRNA(Phe) + AMP + diphosphate + H(+). The polypeptide is Phenylalanine--tRNA ligase alpha subunit (Thermosynechococcus vestitus (strain NIES-2133 / IAM M-273 / BP-1)).